An 813-amino-acid polypeptide reads, in one-letter code: Lon protease (813 aa).

In terms of domain architecture, Lon N-terminal spans 14-207 (LPLLPLRGII…ILTEILAREM (194 aa)). 359–366 (GPPGVGKT) contributes to the ATP binding site. The 182-residue stretch at 595 to 776 (ESQVGVATGL…DQVIREALLE (182 aa)) folds into the Lon proteolytic domain. Catalysis depends on residues Ser682 and Lys725.

Belongs to the peptidase S16 family. As to quaternary structure, homohexamer. Organized in a ring with a central cavity.

It is found in the cytoplasm. It carries out the reaction Hydrolysis of proteins in presence of ATP.. Functionally, ATP-dependent serine protease that mediates the selective degradation of mutant and abnormal proteins as well as certain short-lived regulatory proteins. Required for cellular homeostasis and for survival from DNA damage and developmental changes induced by stress. Degrades polypeptides processively to yield small peptide fragments that are 5 to 10 amino acids long. Binds to DNA in a double-stranded, site-specific manner. The sequence is that of Lon protease from Heliobacterium modesticaldum (strain ATCC 51547 / Ice1).